Reading from the N-terminus, the 143-residue chain is Cofilin (143 aa).

Residues 5–137 (GVAVADESLN…AYESVLEKVS (133 aa)) enclose the ADF-H domain.

This sequence belongs to the actin-binding proteins ADF family.

It localises to the cytoplasm. The protein resides in the cytoskeleton. Its subcellular location is the nucleus matrix. Its function is as follows. Controls reversibly actin polymerization and depolymerization in a pH-sensitive manner. It has the ability to bind G- and F-actin in a 1:1 ratio of cofilin to actin. Binding to F-actin is regulated by tropomyosin. It is the major component of intranuclear and cytoplasmic actin rods. Required for accumulation of actin at the cell division site via depolymerizing actin at the cell ends. In association with myosin II has a role in the assembly of the contractile ring via severing actin filaments. Involved in the maintenance of the contractile ring once formed. In association with profilin and capping protein, has a role in the mitotic reorganization of the actin cytoskeleton. The sequence is that of Cofilin (COF1) from Kluyveromyces lactis (strain ATCC 8585 / CBS 2359 / DSM 70799 / NBRC 1267 / NRRL Y-1140 / WM37) (Yeast).